A 67-amino-acid polypeptide reads, in one-letter code: Small ribosomal subunit protein eS31 (67 aa).

Cys31, Cys34, Cys49, and Cys52 together coordinate Zn(2+). The C4-type zinc finger occupies 31 to 52 (CPKCGAGVFMAEHLNRFACGKC).

This sequence belongs to the eukaryotic ribosomal protein eS31 family. In terms of assembly, part of the 30S ribosomal subunit. Requires Zn(2+) as cofactor.

This is Small ribosomal subunit protein eS31 from Methanococcus maripaludis (strain C6 / ATCC BAA-1332).